The following is a 342-amino-acid chain: MGEAEMNEDVYVLGIETSCDETAAAVVKNGREVLSNVVASQMESHRRFGGVVPEIASRHHVEQITLVIEEAMQQAGVSFASLDAVAVTAGPGLVGALLVGVNAAKALAFAHGLPLIGVHHIAGHIYANQLVAEMKFPLLALVVSGGHTELVFMKEHGNFAVIGETRDDAAGEAYDKVARALGLPYPGGPHIDRLAHEGEPVIDLPRAWLEEGSYDFSFSGLKSAVLNALHNAKQRGEEIDPRQMAASFQASVVDVLVTKTVQAAKEYRVRQVLLAGGVAANRGLRAALQDKMKELPDVELVIPPLSLCTDNAAMIAVAGTVLYQQGKRADLALNANPSLPLV.

The Fe cation site is built by H120 and H124. Residues 142 to 146, D175, G188, D192, and N281 each bind substrate; that span reads VVSGG. D310 lines the Fe cation pocket.

The protein belongs to the KAE1 / TsaD family. The cofactor is Fe(2+).

It localises to the cytoplasm. It carries out the reaction L-threonylcarbamoyladenylate + adenosine(37) in tRNA = N(6)-L-threonylcarbamoyladenosine(37) in tRNA + AMP + H(+). Functionally, required for the formation of a threonylcarbamoyl group on adenosine at position 37 (t(6)A37) in tRNAs that read codons beginning with adenine. Is involved in the transfer of the threonylcarbamoyl moiety of threonylcarbamoyl-AMP (TC-AMP) to the N6 group of A37, together with TsaE and TsaB. TsaD likely plays a direct catalytic role in this reaction. This is tRNA N6-adenosine threonylcarbamoyltransferase from Geobacillus kaustophilus (strain HTA426).